Reading from the N-terminus, the 237-residue chain is Phosphoribosylaminoimidazole-succinocarboxamide synthase (237 aa).

It belongs to the SAICAR synthetase family.

It catalyses the reaction 5-amino-1-(5-phospho-D-ribosyl)imidazole-4-carboxylate + L-aspartate + ATP = (2S)-2-[5-amino-1-(5-phospho-beta-D-ribosyl)imidazole-4-carboxamido]succinate + ADP + phosphate + 2 H(+). It functions in the pathway purine metabolism; IMP biosynthesis via de novo pathway; 5-amino-1-(5-phospho-D-ribosyl)imidazole-4-carboxamide from 5-amino-1-(5-phospho-D-ribosyl)imidazole-4-carboxylate: step 1/2. The polypeptide is Phosphoribosylaminoimidazole-succinocarboxamide synthase (Cronobacter sakazakii (strain ATCC BAA-894) (Enterobacter sakazakii)).